The chain runs to 383 residues: Chorismate synthase (383 aa).

2 residues coordinate NADP(+): arginine 40 and arginine 46. Residues 128-130, glycine 291, 306-310, and arginine 332 contribute to the FMN site; these read RAS and KPIPT.

Belongs to the chorismate synthase family. In terms of assembly, homotetramer. It depends on FMNH2 as a cofactor.

It catalyses the reaction 5-O-(1-carboxyvinyl)-3-phosphoshikimate = chorismate + phosphate. Its pathway is metabolic intermediate biosynthesis; chorismate biosynthesis; chorismate from D-erythrose 4-phosphate and phosphoenolpyruvate: step 7/7. Functionally, catalyzes the anti-1,4-elimination of the C-3 phosphate and the C-6 proR hydrogen from 5-enolpyruvylshikimate-3-phosphate (EPSP) to yield chorismate, which is the branch point compound that serves as the starting substrate for the three terminal pathways of aromatic amino acid biosynthesis. This reaction introduces a second double bond into the aromatic ring system. The sequence is that of Chorismate synthase from Moorella thermoacetica (strain ATCC 39073 / JCM 9320).